Here is a 313-residue protein sequence, read N- to C-terminus: MNDIENLDRPPAIFIMGPTASGKTALSIALRQRLPVELVSVDSALIYRGMDIGTAKPSAQELALAPHRLIDIRDPAESYSAADFRKDALKEMADITAAGRIPLLVGGTMLYFKALLDGLSPLPSADPQVRQRIEQQASELGWGALHQQLAVIDPVAAARIHPNDPQRLSRALEVFFISGKTLTELTKISGETLPYRVHQFAIAPASRELLHQRIELRFHQMLDAGFEAEARVLFDRGDLHTDLPAIRCVGYRQMWSYLSGEIDYNDMVYRGVCATRQLAKRQMTWLRGWSSVQWLDSDKPGEALDSVIQVVSA.

17 to 24 contributes to the ATP binding site; it reads GPTASGKT. Residue 19 to 24 participates in substrate binding; that stretch reads TASGKT. 3 interaction with substrate tRNA regions span residues 42–45, 166–170, and 247–252; these read DSAL, QRLSR, and RCVGYR.

Belongs to the IPP transferase family. In terms of assembly, monomer. It depends on Mg(2+) as a cofactor.

It catalyses the reaction adenosine(37) in tRNA + dimethylallyl diphosphate = N(6)-dimethylallyladenosine(37) in tRNA + diphosphate. In terms of biological role, catalyzes the transfer of a dimethylallyl group onto the adenine at position 37 in tRNAs that read codons beginning with uridine, leading to the formation of N6-(dimethylallyl)adenosine (i(6)A). The polypeptide is tRNA dimethylallyltransferase (Yersinia pseudotuberculosis serotype O:1b (strain IP 31758)).